Reading from the N-terminus, the 489-residue chain is Cysteine--tRNA ligase (489 aa).

A Zn(2+)-binding site is contributed by Cys27. Positions 29–39 match the 'HIGH' region motif; it reads VTVYDLCHLGH. Zn(2+)-binding residues include Cys211, His236, and Glu240. A 'KMSKS' region motif is present at residues 268–272; sequence KMSKS. An ATP-binding site is contributed by Lys271.

Belongs to the class-I aminoacyl-tRNA synthetase family. In terms of assembly, monomer. Zn(2+) serves as cofactor.

It localises to the cytoplasm. It catalyses the reaction tRNA(Cys) + L-cysteine + ATP = L-cysteinyl-tRNA(Cys) + AMP + diphosphate. This chain is Cysteine--tRNA ligase, found in Prochlorococcus marinus (strain MIT 9215).